Here is a 418-residue protein sequence, read N- to C-terminus: Gamma-glutamyl phosphate reductase (418 aa).

The protein belongs to the gamma-glutamyl phosphate reductase family.

It localises to the cytoplasm. The catalysed reaction is L-glutamate 5-semialdehyde + phosphate + NADP(+) = L-glutamyl 5-phosphate + NADPH + H(+). It functions in the pathway amino-acid biosynthesis; L-proline biosynthesis; L-glutamate 5-semialdehyde from L-glutamate: step 2/2. In terms of biological role, catalyzes the NADPH-dependent reduction of L-glutamate 5-phosphate into L-glutamate 5-semialdehyde and phosphate. The product spontaneously undergoes cyclization to form 1-pyrroline-5-carboxylate. The polypeptide is Gamma-glutamyl phosphate reductase (Dechloromonas aromatica (strain RCB)).